The primary structure comprises 467 residues: 3-isopropylmalate dehydratase large subunit (467 aa).

Positions 349, 408, and 411 each coordinate [4Fe-4S] cluster.

It belongs to the aconitase/IPM isomerase family. LeuC type 1 subfamily. In terms of assembly, heterodimer of LeuC and LeuD. The cofactor is [4Fe-4S] cluster.

The enzyme catalyses (2R,3S)-3-isopropylmalate = (2S)-2-isopropylmalate. The protein operates within amino-acid biosynthesis; L-leucine biosynthesis; L-leucine from 3-methyl-2-oxobutanoate: step 2/4. In terms of biological role, catalyzes the isomerization between 2-isopropylmalate and 3-isopropylmalate, via the formation of 2-isopropylmaleate. The protein is 3-isopropylmalate dehydratase large subunit of Dinoroseobacter shibae (strain DSM 16493 / NCIMB 14021 / DFL 12).